We begin with the raw amino-acid sequence, 291 residues long: Lipoyl synthase (291 aa).

The [4Fe-4S] cluster site is built by Cys35, Cys40, Cys46, Cys61, Cys65, Cys68, and Ser273. The Radical SAM core domain occupies 47 to 262 (FGKRQATFLI…KEKALAMGFE (216 aa)).

Belongs to the radical SAM superfamily. Lipoyl synthase family. It depends on [4Fe-4S] cluster as a cofactor.

It is found in the cytoplasm. The enzyme catalyses [[Fe-S] cluster scaffold protein carrying a second [4Fe-4S](2+) cluster] + N(6)-octanoyl-L-lysyl-[protein] + 2 oxidized [2Fe-2S]-[ferredoxin] + 2 S-adenosyl-L-methionine + 4 H(+) = [[Fe-S] cluster scaffold protein] + N(6)-[(R)-dihydrolipoyl]-L-lysyl-[protein] + 4 Fe(3+) + 2 hydrogen sulfide + 2 5'-deoxyadenosine + 2 L-methionine + 2 reduced [2Fe-2S]-[ferredoxin]. It functions in the pathway protein modification; protein lipoylation via endogenous pathway; protein N(6)-(lipoyl)lysine from octanoyl-[acyl-carrier-protein]: step 2/2. Catalyzes the radical-mediated insertion of two sulfur atoms into the C-6 and C-8 positions of the octanoyl moiety bound to the lipoyl domains of lipoate-dependent enzymes, thereby converting the octanoylated domains into lipoylated derivatives. The protein is Lipoyl synthase of Geobacter sp. (strain M21).